The chain runs to 350 residues: Probable peptidyl-alpha-hydroxyglycine alpha-amidating lyase pgal-1 (350 aa).

Residues 1–19 (MRASTACLVALLAPFYISA) form the signal peptide. One copy of the NHL 1 repeat lies at 46–90 (DRELIGLFNPSKEIGQVSGLAVNKNGHIVAFHRSGRVWDEKSFND). Asn103 carries N-linked (GlcNAc...) asparagine glycosylation. 3 NHL repeats span residues 113-154 (KKVI…IDAK), 162-206 (LGEK…FDAK), and 212-256 (QINA…FSAG). 2 cysteine pairs are disulfide-bonded: Cys176/Cys196 and Cys241/Cys252.

The protein belongs to the peptidyl-alpha-hydroxyglycine alpha-amidating lyase family. Requires Zn(2+) as cofactor.

It localises to the secreted. The enzyme catalyses a [peptide]-C-terminal (2S)-2-hydroxyglycine = a [peptide]-C-terminal amide + glyoxylate. In terms of biological role, probable lyase that catalyzes an essential reaction in C-terminal alpha-amidation of peptides. Mediates the dismutation of the unstable peptidyl(2-hydroxyglycine) intermediate to glyoxylate and the corresponding desglycine peptide amide. C-terminal amidation of peptides such as neuropeptides is essential for full biological activity. This is Probable peptidyl-alpha-hydroxyglycine alpha-amidating lyase pgal-1 from Caenorhabditis elegans.